The following is an 81-amino-acid chain: Sulfur carrier protein TusA (81 aa).

Catalysis depends on Cys-19, which acts as the Cysteine persulfide intermediate.

This sequence belongs to the sulfur carrier protein TusA family.

Its subcellular location is the cytoplasm. Its function is as follows. Sulfur carrier protein which probably makes part of a sulfur-relay system. The protein is Sulfur carrier protein TusA of Vibrio vulnificus (strain CMCP6).